A 21-amino-acid polypeptide reads, in one-letter code: Peptidyl-prolyl cis-trans isomerase (21 aa).

Residues 1–21 (ENFKIKHTEPGLLSMANAGKN) are disordered.

Belongs to the cyclophilin-type PPIase family. PPIase A subfamily.

It carries out the reaction [protein]-peptidylproline (omega=180) = [protein]-peptidylproline (omega=0). PPIases accelerate the folding of proteins. It catalyzes the cis-trans isomerization of proline imidic peptide bonds in oligopeptides. The chain is Peptidyl-prolyl cis-trans isomerase from Naegleria fowleri (Brain eating amoeba).